The primary structure comprises 469 residues: Pancreatic lipase-related protein 2 (469 aa).

A signal peptide spans 1–17 (MLPPWTLGLLLLATVRG). The cysteines at positions 21 and 27 are disulfide-linked. Positions 93-105 (IHGFLDKAEDSWP) are required for galactolipase activity. A disulfide bridge connects residues cysteine 109 and cysteine 120. Serine 171 functions as the Nucleophile in the catalytic mechanism. Aspartate 195 functions as the Charge relay system in the catalytic mechanism. 4 residues coordinate Ca(2+): glutamate 206, arginine 209, aspartate 211, and aspartate 214. Cysteine 256 and cysteine 280 are disulfide-bonded. The segment at 257 to 279 (KKNVLSTITDIDGIWEGIGGFVS) is required for galactolipase activity. Histidine 282 functions as the Charge relay system in the catalytic mechanism. 2 disulfides stabilise this stretch: cysteine 304/cysteine 315 and cysteine 318/cysteine 323. Residues asparagine 353 and asparagine 428 are each glycosylated (N-linked (GlcNAc...) asparagine). The PLAT domain occupies 357-469 (WRYKISVTLS…ENVLQSLYPC (113 aa)). Cysteines 453 and 469 form a disulfide.

The protein belongs to the AB hydrolase superfamily. Lipase family. As to expression, pancreas.

The protein resides in the secreted. It localises to the zymogen granule membrane. The protein localises to the cell projection. It is found in the neuron projection. It catalyses the reaction a triacylglycerol + H2O = a diacylglycerol + a fatty acid + H(+). The catalysed reaction is a 1,2-diacyl-3-O-(beta-D-galactosyl)-sn-glycerol + 2 H2O = 3-beta-D-galactosyl-sn-glycerol + 2 a fatty acid + 2 H(+). It carries out the reaction 1,2,3-tri-(9Z-octadecenoyl)-glycerol + H2O = di-(9Z)-octadecenoylglycerol + (9Z)-octadecenoate + H(+). The enzyme catalyses di-(9Z)-octadecenoylglycerol + H2O = (9Z-octadecenoyl)-glycerol + (9Z)-octadecenoate + H(+). It catalyses the reaction (9Z-octadecenoyl)-glycerol + H2O = glycerol + (9Z)-octadecenoate + H(+). The catalysed reaction is 1-(9Z-octadecenoyl)-glycerol + H2O = glycerol + (9Z)-octadecenoate + H(+). It carries out the reaction 1,2,3-tripropanoylglycerol + H2O = dipropanoylglycerol + propanoate + H(+). The enzyme catalyses 1,2,3-tributanoylglycerol + H2O = dibutanoylglycerol + butanoate + H(+). It catalyses the reaction 1,2,3-trioctanoylglycerol + H2O = dioctanoylglycerol + octanoate + H(+). The catalysed reaction is 1,2-didecanoylglycerol + H2O = decanoylglycerol + decanoate + H(+). It carries out the reaction long chain 1,2-diacyl-3-O-beta-D-galactosyl-sn-glycerol + H2O = long chain acyl-3-O-beta-D-galactosyl-sn-glycerol + a fatty acid + H(+). The enzyme catalyses 1,2-dioctanoyl-3-O-beta-D-galactosyl-sn-glycerol + H2O = octanoyl-3-(beta-D-galactosyl)-sn-glycerol + octanoate + H(+). It catalyses the reaction 1,2-didodecanoyl-3-beta-D-galactosyl-sn-glycerol + H2O = dodecanoyl-3-beta-D-galactosyl-sn-glycerol + dodecanoate + H(+). The catalysed reaction is 1-beta-D-galactosyl-2,3-didodecanoyl-sn-glycerol + H2O = 1-beta-D-galactosyl-dodecanoyl-sn-glycerol + dodecanoate + H(+). It carries out the reaction a 1,2-diacyl-3-O-[alpha-D-galactosyl-(1-&gt;6)-beta-D-galactosyl]-sn-glycerol + H2O = acyl-3-O-[alpha-D-galactosyl-(1-&gt;6)-beta-D-galactosyl]-sn-glycerol + a fatty acid + H(+). The enzyme catalyses long chain 1,2-diacyl-3-O-[alpha-D-galactosyl-(1-&gt;6)-beta-D-galactosyl]-sn-glycerol + H2O = long chain acyl-3-O-[alpha-D-galactosyl-(1-&gt;6)-beta-D-galactosyl]-sn-glycerol + a fatty acid + H(+). It catalyses the reaction 1,2-dioctanoyl-3-O-[alpha-D-galactosyl-(1-&gt;6)-beta-D-galactosyl]-sn-glycerol + H2O = octanoyl-3-O-[alpha-D-galactosyl-(1-&gt;6)-beta-D-galactosyl]-sn-glycerol + octanoate + H(+). The catalysed reaction is 1,2-didodecanoyl-3-O-[alpha-D-galactosyl-(1-&gt;6)-beta-D-galactosyl]-sn-glycerol + H2O = dodecanoyl-3-O-[alpha-D-galactosyl-(1-&gt;6)-beta-D-galactosyl]-sn-glycerol + dodecanoate + H(+). It carries out the reaction a 1,2-diacyl-sn-glycero-3-phosphocholine + H2O = a monoacyl-sn-glycero-3-phosphocholine + a fatty acid + H(+). It functions in the pathway glycerolipid metabolism; triacylglycerol degradation. The protein operates within glycolipid metabolism. With respect to regulation, regulated by CLPS and bile salts levels ranging 1-5 mM in neonates and 2-30 mM in healthy adults. CLPS stimulates milk fat digestion in the presence of 4 mM bile salts. Triacylglycerol lipase activity toward short- and medium-chain triglycerides is inhibited by increasing concentrations of bile salts and weakly reactivated by CLPS. Optimal triacylglycerol lipase activity is reached at bile salts concentrations ranging from 0.1 to 0.5 mM and then decreases at concentrations higher than 1 mM. Lipase activity toward long-chain glycerolipids is stimulated by CLPS in the presence of 4 mM bile salts. Galactolipase activity is inhibited at high concentrations of bile salts. Triacylglycerol lipase activity is inhibited by anti-obesity drug tetrahydrolipstatin. Its function is as follows. Lipase that primarily hydrolyzes triglycerides and galactosylglycerides. In neonates, may play a major role in pancreatic digestion of dietary fats such as milk fat globules enriched in long-chain triglycerides. Hydrolyzes short-, medium- and long-chain fatty acyls in triglycerides without apparent positional specificity. Can completely deacylate triacylglycerols. When the liver matures and bile salt synthesis increases, likely functions mainly as a galactolipase and monoacylglycerol lipase. Hydrolyzes monogalactosyldiglycerols (MGDG) and digalactosyldiacylglycerols (DGDG) present in a plant-based diet, releasing long-chain polyunsaturated fatty acids. Hydrolyzes medium- and long-chain fatty acyls in galactolipids. May act together with LIPF to hydrolyze partially digested triglycerides. Hydrolyzes long-chain monoglycerides with high efficiency. In cytotoxic T cells, contributes to perforin-dependent cell lysis, but is unlikely to mediate direct cytotoxicity. Also has low phospholipase activity. In neurons, required for the localization of the phospholipid 1-oleoyl-2-palmitoyl-PC (OPPC) to neurite tips through acyl chain remodeling of membrane phospholipids. The resulting OPPC-rich lipid membrane domain recruits the t-SNARE protein STX4 by selectively interacting with the STX4 transmembrane domain and this promotes surface expression of the dopamine transporter SLC6A3/DAT at neurite tips by facilitating fusion of SLC6A3-containing transport vesicles with the plasma membrane. This chain is Pancreatic lipase-related protein 2, found in Homo sapiens (Human).